The chain runs to 293 residues: MGRLSSTLCLTFLILATVAFGVPPKKSINVPFGRNYFPTWAFDHIKYLNGGSEVHLVLDKYTGTGFQSKGSYLFGHFSMHIKMVAGDSAGTVTAFYLSSQNSEHDEIDFEFLGNRTGQPYILQTNVFTGGAGNREQRINLWFDPSKDYHSYSVLWNMYQIVFFVDDVPIRVFKNSKDVGVKFPFNQPMKIYSSLWNADDWATRGGLEKTNWEKAPFVASYRGFHVDGCEASVNAKFCETQGKRWWDQKEFQDLDANQYKRLKWVRKRYTIYNYCTDRVRFPVPPPECRRDRDI.

An N-terminal signal peptide occupies residues 1–21; sequence MGRLSSTLCLTFLILATVAFG. The GH16 domain maps to 23 to 220; that stretch reads PPKKSINVPF…WEKAPFVASY (198 aa). Residue E106 is the Nucleophile of the active site. E110 functions as the Proton donor in the catalytic mechanism. Xyloglucan is bound at residue E110. N-linked (GlcNAc...) asparagine glycosylation is present at N114. Xyloglucan is bound by residues 123-125, 133-135, 199-200, and G204; these read QTN, NRE, and DW. Disulfide bonds link C228–C237 and C274–C287. R279 is a binding site for xyloglucan.

It belongs to the glycosyl hydrolase 16 family. XTH group 1 subfamily. In terms of processing, contains at least one intrachain disulfide bond essential for its enzymatic activity. As to expression, root specific.

It localises to the secreted. The protein resides in the cell wall. It is found in the extracellular space. The protein localises to the apoplast. The catalysed reaction is breaks a beta-(1-&gt;4) bond in the backbone of a xyloglucan and transfers the xyloglucanyl segment on to O-4 of the non-reducing terminal glucose residue of an acceptor, which can be a xyloglucan or an oligosaccharide of xyloglucan.. Functionally, catalyzes xyloglucan endohydrolysis (XEH) and/or endotransglycosylation (XET). Cleaves and religates xyloglucan polymers, an essential constituent of the primary cell wall, and thereby participates in cell wall construction of growing tissues. This Arabidopsis thaliana (Mouse-ear cress) protein is Probable xyloglucan endotransglucosylase/hydrolase protein 5 (XTH5).